Reading from the N-terminus, the 385-residue chain is S-adenosylmethionine synthase (385 aa).

An ATP-binding site is contributed by histidine 15. Aspartate 17 is a Mg(2+) binding site. Residue glutamate 43 coordinates K(+). Residues glutamate 56 and glutamine 99 each coordinate L-methionine. Residues 99–109 (QSPDINQGVDR) form a flexible loop region. Residues 164–166 (DAK), 230–231 (RF), aspartate 239, 245–246 (RK), alanine 262, and lysine 266 contribute to the ATP site. Aspartate 239 contributes to the L-methionine binding site. Lysine 270 provides a ligand contact to L-methionine.

The protein belongs to the AdoMet synthase family. As to quaternary structure, homotetramer; dimer of dimers. It depends on Mg(2+) as a cofactor. K(+) serves as cofactor.

It is found in the cytoplasm. It catalyses the reaction L-methionine + ATP + H2O = S-adenosyl-L-methionine + phosphate + diphosphate. Its pathway is amino-acid biosynthesis; S-adenosyl-L-methionine biosynthesis; S-adenosyl-L-methionine from L-methionine: step 1/1. Functionally, catalyzes the formation of S-adenosylmethionine (AdoMet) from methionine and ATP. The overall synthetic reaction is composed of two sequential steps, AdoMet formation and the subsequent tripolyphosphate hydrolysis which occurs prior to release of AdoMet from the enzyme. The protein is S-adenosylmethionine synthase of Hamiltonella defensa subsp. Acyrthosiphon pisum (strain 5AT).